The primary structure comprises 437 residues: Enolase 2 (437 aa).

Residue lysine 60 forms a Glycyl lysine isopeptide (Lys-Gly) (interchain with G-Cter in ubiquitin) linkage. Serine 138 is modified (phosphoserine). The active site involves histidine 160. Serine 188 bears the Phosphoserine mark. Residue lysine 243 forms a Glycyl lysine isopeptide (Lys-Gly) (interchain with G-Cter in ubiquitin) linkage. Residues aspartate 247 and glutamate 296 each coordinate Mg(2+). Residue threonine 313 is modified to Phosphothreonine. Aspartate 321 contributes to the Mg(2+) binding site. A Phosphothreonine modification is found at threonine 324. Lysine 358 is covalently cross-linked (Glycyl lysine isopeptide (Lys-Gly) (interchain with G-Cter in ubiquitin)).

This sequence belongs to the enolase family. As to quaternary structure, homodimer. The cofactor is Mg(2+).

It localises to the cytoplasm. It carries out the reaction (2R)-2-phosphoglycerate = phosphoenolpyruvate + H2O. The protein operates within carbohydrate degradation; glycolysis; pyruvate from D-glyceraldehyde 3-phosphate: step 4/5. The protein is Enolase 2 (ENO2) of Saccharomyces cerevisiae (strain ATCC 204508 / S288c) (Baker's yeast).